Consider the following 1334-residue polypeptide: Lysine-specific demethylase 3A-B (1334 aa).

Disordered regions lie at residues 243 to 288, 352 to 382, and 514 to 533; these read DQND…KTSF, PGIQ…SQNL, and KPQE…VTYP. A compositionally biased stretch (basic and acidic residues) spans 267–283; it reads TEVKQTRNEEVPSKDVT. The segment at 684-709 adopts a C6-type zinc-finger fold; the sequence is CDACDTTIFNLHWVCPKCGFGVCVDC. Residues 897–901 carry the LXXLL motif motif; sequence LRNLL. The JmjC domain occupies 1089–1294; it reads RREGKLNLAA…HCFCLTQEFR (206 aa). Residues H1133, D1135, and H1262 each coordinate Fe cation.

It belongs to the JHDM2 histone demethylase family. Fe(2+) is required as a cofactor.

The protein resides in the cytoplasm. Its subcellular location is the nucleus. It catalyses the reaction N(6),N(6)-dimethyl-L-lysyl(9)-[histone H3] + 2 2-oxoglutarate + 2 O2 = L-lysyl(9)-[histone H3] + 2 formaldehyde + 2 succinate + 2 CO2. Functionally, histone demethylase that specifically demethylates 'Lys-9' of histone H3, thereby playing a central role in histone code. Preferentially demethylates mono- and dimethylated H3 'Lys-9' residue, with a preference for dimethylated residue, while it has weak or no activity on trimethylated H3 'Lys-9'. Demethylation of Lys residue generates formaldehyde and succinate. The protein is Lysine-specific demethylase 3A-B (kdm3a-b) of Xenopus laevis (African clawed frog).